Reading from the N-terminus, the 195-residue chain is GTP cyclohydrolase-2 (195 aa).

48–52 (RIHSE) is a binding site for GTP. Cys-53, Cys-64, and Cys-66 together coordinate Zn(2+). GTP contacts are provided by residues Gln-69, 90–92 (EGR), and Thr-112. Residue Asp-124 is the Proton acceptor of the active site. The active-site Nucleophile is the Arg-126. 2 residues coordinate GTP: Thr-147 and Lys-152.

Belongs to the GTP cyclohydrolase II family. Requires Zn(2+) as cofactor.

The catalysed reaction is GTP + 4 H2O = 2,5-diamino-6-hydroxy-4-(5-phosphoribosylamino)-pyrimidine + formate + 2 phosphate + 3 H(+). The protein operates within cofactor biosynthesis; riboflavin biosynthesis; 5-amino-6-(D-ribitylamino)uracil from GTP: step 1/4. Catalyzes the conversion of GTP to 2,5-diamino-6-ribosylamino-4(3H)-pyrimidinone 5'-phosphate (DARP), formate and pyrophosphate. This Campylobacter fetus subsp. fetus (strain 82-40) protein is GTP cyclohydrolase-2.